The primary structure comprises 378 residues: Chaperone protein DnaJ (378 aa).

One can recognise a J domain in the interval 4 to 68 (DFYEILGVSR…ETRARYDRFG (65 aa)). The segment at 136–218 (GGEKEIRIPH…CGGAGRKQET (83 aa)) adopts a CR-type zinc-finger fold. 8 residues coordinate Zn(2+): cysteine 149, cysteine 152, cysteine 166, cysteine 169, cysteine 192, cysteine 195, cysteine 206, and cysteine 209. 4 CXXCXGXG motif repeats span residues 149 to 156 (CKTCSGSG), 166 to 173 (CGTCNGTG), 192 to 199 (CPTCNGEG), and 206 to 213 (CESCGGAG).

It belongs to the DnaJ family. As to quaternary structure, homodimer. Requires Zn(2+) as cofactor.

The protein localises to the cytoplasm. In terms of biological role, participates actively in the response to hyperosmotic and heat shock by preventing the aggregation of stress-denatured proteins and by disaggregating proteins, also in an autonomous, DnaK-independent fashion. Unfolded proteins bind initially to DnaJ; upon interaction with the DnaJ-bound protein, DnaK hydrolyzes its bound ATP, resulting in the formation of a stable complex. GrpE releases ADP from DnaK; ATP binding to DnaK triggers the release of the substrate protein, thus completing the reaction cycle. Several rounds of ATP-dependent interactions between DnaJ, DnaK and GrpE are required for fully efficient folding. Also involved, together with DnaK and GrpE, in the DNA replication of plasmids through activation of initiation proteins. This chain is Chaperone protein DnaJ, found in Picosynechococcus sp. (strain ATCC 27264 / PCC 7002 / PR-6) (Agmenellum quadruplicatum).